Here is a 168-residue protein sequence, read N- to C-terminus: MALNLQDKQAIVAEVSEVAKGALSAVVADSRGVTVDKMTELRKAGREAGVYIRVVRNTLIRRAVEGTAYECLKEAFVGPTLIAFSNEHPGAAARLFKEFAKANPAFEIKAAAFEGEFIPAANIDRLATLPTYEEAIARLMSTMKEAVAGKLVRTLAALRELREQKEVA.

Belongs to the universal ribosomal protein uL10 family. As to quaternary structure, part of the ribosomal stalk of the 50S ribosomal subunit. The N-terminus interacts with L11 and the large rRNA to form the base of the stalk. The C-terminus forms an elongated spine to which L12 dimers bind in a sequential fashion forming a multimeric L10(L12)X complex.

Functionally, forms part of the ribosomal stalk, playing a central role in the interaction of the ribosome with GTP-bound translation factors. The protein is Large ribosomal subunit protein uL10 of Photorhabdus laumondii subsp. laumondii (strain DSM 15139 / CIP 105565 / TT01) (Photorhabdus luminescens subsp. laumondii).